The chain runs to 126 residues: Spermidine export protein MdtJ (126 aa).

Helical transmembrane passes span M1–M21, I30–A50, V54–F74, and E81–L101.

This sequence belongs to the drug/metabolite transporter (DMT) superfamily. Small multidrug resistance (SMR) (TC 2.A.7.1) family. MdtJ subfamily. Forms a complex with MdtI.

Its subcellular location is the cell inner membrane. Catalyzes the excretion of spermidine. This is Spermidine export protein MdtJ from Sodalis glossinidius (strain morsitans).